Here is a 638-residue protein sequence, read N- to C-terminus: Growth hormone receptor (638 aa).

The signal sequence occupies residues 1-18 (MDLWQLLLTLALAGSSDA). Residues 19 to 264 (FSGSEATAAI…SQFTCEEDFY (246 aa)) lie on the Extracellular side of the membrane. N-linked (GlcNAc...) asparagine glycosylation is present at asparagine 46. 2 disulfides stabilise this stretch: cysteine 56-cysteine 66 and cysteine 101-cysteine 112. An N-linked (GlcNAc...) asparagine glycan is attached at asparagine 115. Residues cysteine 126 and cysteine 140 are joined by a disulfide bond. In terms of domain architecture, Fibronectin type-III spans 151–254 (PPIALNWTLL…EVLYVTLPQM (104 aa)). Residues asparagine 156, asparagine 161, and asparagine 200 are each glycosylated (N-linked (GlcNAc...) asparagine). A WSXWS motif motif is present at residues 240–244 (YGEFS). The tract at residues 260–262 (EED) is required for ADAM17-mediated proteolysis. A helical transmembrane segment spans residues 265 to 288 (FPWLLIIIFGIFGLTVMLFVFLFS). The Cytoplasmic portion of the chain corresponds to 289 to 638 (KQQRIKMLIL…STDQLNKIMP (350 aa)). The tract at residues 294-379 (KMLILPPVPV…HEKSHSNLGV (86 aa)) is required for JAK2 binding. Positions 297–305 (ILPPVPVPK) match the Box 1 motif motif. The short motif at 340 to 349 (DSWVEFIELD) is the UbE motif element. At serine 341 the chain carries Phosphoserine. The interval 353–391 (PDEKTEESDTDRLLSSDHEKSHSNLGVKDGDSGRTSCCE) is disordered. Over residues 362–384 (TDRLLSSDHEKSHSNLGVKDGDS) the composition is skewed to basic and acidic residues. Phosphotyrosine; by JAK2 occurs at positions 487 and 595.

This sequence belongs to the type I cytokine receptor family. Type 1 subfamily. On growth hormone (GH) binding, forms homodimers and binds JAK2 via a box 1-containing domain. In terms of processing, the soluble form (GHBP) is produced by phorbol ester-promoted proteolytic cleavage at the cell surface (shedding) by ADAM17/TACE. Shedding is inhibited by growth hormone (GH) binding to the receptor probably due to a conformational change in GHR rendering the receptor inaccessible to ADAM17. Post-translationally, on GH binding, phosphorylated on tyrosine residues in the cytoplasmic domain by JAK2. Ubiquitinated by the ECS(SOCS2) complex following ligand-binding and phosphorylation by JAK2, leading to its degradation by the proteasome. Regulation by the ECS(SOCS2) complex acts as a negative feedback loop of growth hormone receptor signaling. Ubiquitination is not sufficient for GHR internalization. As to expression, expressed in various tissues with high expression in liver and skeletal muscle. In terms of tissue distribution, isoform 2 is expressed in lung, stomach and muscle. Predominantly expressed in kidney, bladder, adrenal gland and brain stem. Highly expressed in placental villi.

It localises to the cell membrane. The protein localises to the secreted. Its function is as follows. Receptor for pituitary gland growth hormone (GH1) involved in regulating postnatal body growth. On ligand binding, couples to the JAK2/STAT5 pathway. Functionally, the soluble form (GHBP) acts as a reservoir of growth hormone in plasma and may be a modulator/inhibitor of GH signaling. Up-regulates the production of the soluble Growth hormone-binding protein form (GHBP) and acts as a negative inhibitor of growth hormone signaling. This Homo sapiens (Human) protein is Growth hormone receptor (GHR).